The sequence spans 152 residues: Large ribosomal subunit protein bL9 (152 aa).

The protein belongs to the bacterial ribosomal protein bL9 family.

Its function is as follows. Binds to the 23S rRNA. This Crocosphaera subtropica (strain ATCC 51142 / BH68) (Cyanothece sp. (strain ATCC 51142)) protein is Large ribosomal subunit protein bL9.